Reading from the N-terminus, the 328-residue chain is Malate dehydrogenase (328 aa).

11–17 is a binding site for NAD(+); that stretch reads GAAGQIG. Substrate contacts are provided by arginine 94 and arginine 100. Residues asparagine 107, glutamine 114, and 131-133 contribute to the NAD(+) site; that span reads VGN. Residues asparagine 133 and arginine 164 each contribute to the substrate site. Histidine 189 serves as the catalytic Proton acceptor.

It belongs to the LDH/MDH superfamily. MDH type 2 family.

The catalysed reaction is (S)-malate + NAD(+) = oxaloacetate + NADH + H(+). Catalyzes the reversible oxidation of malate to oxaloacetate. The protein is Malate dehydrogenase of Xanthomonas campestris pv. campestris (strain B100).